The primary structure comprises 187 residues: PsbQ-like protein 3, chloroplastic (187 aa).

The transit peptide at 1–32 directs the protein to the chloroplast; sequence MAISKPPPLHFTFFHNQDSSIDTSDSNLALSI. The transit peptide at 33-60 directs the protein to the thylakoid; that stretch reads DTSRRRRDVLLTISGTLIPQLFFFDRKR.

The protein belongs to the PsbQ family. Subunit of the lumenal protuberance of the NDH complex.

It localises to the plastid. The protein localises to the chloroplast thylakoid membrane. Functionally, required for both formation and activity of the chloroplast NAD(P)H dehydrogenase (NDH) complex. This chain is PsbQ-like protein 3, chloroplastic (PQL3), found in Arabidopsis thaliana (Mouse-ear cress).